Consider the following 117-residue polypeptide: Large ribosomal subunit protein bL20 (117 aa).

This sequence belongs to the bacterial ribosomal protein bL20 family.

Its function is as follows. Binds directly to 23S ribosomal RNA and is necessary for the in vitro assembly process of the 50S ribosomal subunit. It is not involved in the protein synthesizing functions of that subunit. The protein is Large ribosomal subunit protein bL20 of Chromohalobacter salexigens (strain ATCC BAA-138 / DSM 3043 / CIP 106854 / NCIMB 13768 / 1H11).